Reading from the N-terminus, the 494-residue chain is Ribonuclease H (494 aa).

Disordered stretches follow at residues 79-148 (NRRR…APPP) and 205-231 (RSGL…VGLR). Composition is skewed to polar residues over residues 84–100 (GSTS…NQLA) and 131–143 (PTTS…TRTS). The RNase H type-1 domain occupies 272 to 488 (SSVPQVVYVD…ADVLAVAGAR (217 aa)). Positions 281, 325, 374, and 480 each coordinate Mg(2+).

Belongs to the RNase H family. As to quaternary structure, monomer. It depends on Mg(2+) as a cofactor.

The catalysed reaction is Endonucleolytic cleavage to 5'-phosphomonoester.. In terms of biological role, endonuclease that specifically degrades the RNA of RNA-DNA hybrids. The polypeptide is Ribonuclease H (RNH1) (Crithidia fasciculata).